The sequence spans 514 residues: 2,3-bisphosphoglycerate-independent phosphoglycerate mutase (514 aa).

Positions 14 and 64 each coordinate Mn(2+). Ser64 acts as the Phosphoserine intermediate in catalysis. Substrate is bound by residues His125, Arg155–Asp156, Arg187, Arg193, Arg263–Arg266, and Lys336. Mn(2+) contacts are provided by Asp403, His407, Asp444, His445, and His463.

The protein belongs to the BPG-independent phosphoglycerate mutase family. Monomer. Requires Mn(2+) as cofactor.

It catalyses the reaction (2R)-2-phosphoglycerate = (2R)-3-phosphoglycerate. It participates in carbohydrate degradation; glycolysis; pyruvate from D-glyceraldehyde 3-phosphate: step 3/5. Catalyzes the interconversion of 2-phosphoglycerate and 3-phosphoglycerate. The sequence is that of 2,3-bisphosphoglycerate-independent phosphoglycerate mutase from Shewanella putrefaciens (strain CN-32 / ATCC BAA-453).